The primary structure comprises 634 residues: Ankyrin repeat and SOCS box protein 2 (634 aa).

A UIM domain is found at 26-45 (SEEELVQMAIEQSLADKTRG). The segment at 35 to 81 (IEQSLADKTRGPTPAETSVSSQTNHQPGHIHPWTRSSSPPESPPARA) is disordered. Residues 49–60 (AETSVSSQTNHQ) are compositionally biased toward polar residues. ANK repeat units follow at residues 104 to 133 (AAMDPVLKAIKEGDEEALKAMIQDGKNLAE), 137 to 167 (EGWLPLHEAAYYGKLGCLKVLQRAYPGTIDQ), 171 to 200 (QEETALYLATCREHLDCLLSLLQAGAEPDI), 204 to 233 (SRETPLYKACERKNAEAVRILVQYNADANH), 237 to 266 (RGWTALHESVSRNDLEVMEILVSGGAKVEA), 270 to 299 (YSITPLFVAAQSGQLEALRFLAKHGADINT), 303 to 332 (DSASALYEACKNEHEDVVEFLLSQGADANK), 336 to 365 (DGLLPLHVASKKGNYRIVQMLLPVTSRTRV), 368 to 397 (SGISPLHLAAERNHDAVLEALLAARFDVNT), 410 to 439 (RRTSALYFAVVNNNVYATELLLLAGADPNR), 440 to 469 (DVISPLLVAIRHGCLRTMQLLLDHGANIDA), and 476 to 504 (TAFPATIMFAMKCLSLLKFLMDLGCDGEP). A Phosphoserine modification is found at Ser371. One can recognise an SOCS box domain in the interval 580 to 634 (EDWAVIKEKAEPPRPLAHLCRLRVRKAIGKYRIKLLDTLPLPGRLIRYLKYENTQ).

It belongs to the ankyrin SOCS box (ASB) family. Component of a probable ECS E3 ubiquitin-protein ligase complex which contains CUL5, either RBX1 or RNF7/RBX2, Elongin BC complex (ELOB and ELOC) and ASB2. Interacts with SKP2. Through its interaction with SKP2, likely to bridge the formation of dimeric E3-ubiquitin-protein ligase complexes composed of an ECS complex and an SCF(SKP2) complex. Interacts with JAK2; the interaction targets JAK2 for Notch-mediated proteasomal degradation. Interacts with TCF3/E2A; the interaction is mediated by SKP2 and targets TCF3 for Notch-mediated proteasomal degradation. Interacts with DES. Monoubiquitinated.

It localises to the cytoplasm. Its subcellular location is the cytoskeleton. The protein localises to the stress fiber. It is found in the myofibril. The protein resides in the sarcomere. It localises to the z line. It participates in protein modification; protein ubiquitination. Substrate-recognition component of a SCF-like ECS (Elongin-Cullin-SOCS-box protein) E3 ubiquitin-protein ligase complex which mediates the ubiquitination and subsequent proteasomal degradation of target proteins. Mediates Notch-induced ubiquitination and degradation of substrates including E2A and JAK2. Required during embryonic heart development for complete heart looping. Required for cardiomyocyte differentiation. Involved in myogenic differentiation and targets filamin FLNB for proteasomal degradation but not filamin FLNA. Also targets DES for proteasomal degradation. Acts as a negative regulator of skeletal muscle mass. This is Ankyrin repeat and SOCS box protein 2 from Rattus norvegicus (Rat).